A 191-amino-acid chain; its full sequence is Glutathione-independent glyoxalase DJ-1 (191 aa).

Residues glutamate 16, cysteine 111, and histidine 130 contribute to the active site.

It belongs to the peptidase C56 family.

It localises to the cytoplasm. Its subcellular location is the nucleus. The catalysed reaction is methylglyoxal + H2O = (R)-lactate + H(+). Its function is as follows. Catalyzes the conversion of methylglyoxal (MG) to D-lactate in a single glutathione (GSH)-independent step. May play a role in detoxifying endogenously produced glyoxals. Involved in protection against reactive oxygen species (ROS). The polypeptide is Glutathione-independent glyoxalase DJ-1 (Schizosaccharomyces pombe (strain 972 / ATCC 24843) (Fission yeast)).